A 246-amino-acid chain; its full sequence is Ribonuclease 3 (246 aa).

An RNase III domain is found at 16 to 146; that stretch reads ATELEAGIGY…LLAAVYLDGG (131 aa). Glu-59 contacts Mg(2+). Asp-63 is an active-site residue. Positions 132 and 135 each coordinate Mg(2+). Glu-135 is an active-site residue. The region spanning 173–242 is the DRBM domain; sequence DFKTEFQEMV…ARQVLARFAA (70 aa).

This sequence belongs to the ribonuclease III family. Homodimer. Requires Mg(2+) as cofactor.

It localises to the cytoplasm. It catalyses the reaction Endonucleolytic cleavage to 5'-phosphomonoester.. Its function is as follows. Digests double-stranded RNA. Involved in the processing of primary rRNA transcript to yield the immediate precursors to the large and small rRNAs (23S and 16S). Processes some mRNAs, and tRNAs when they are encoded in the rRNA operon. Processes pre-crRNA and tracrRNA of type II CRISPR loci if present in the organism. This is Ribonuclease 3 from Geobacter metallireducens (strain ATCC 53774 / DSM 7210 / GS-15).